The primary structure comprises 310 residues: Prostate androgen-regulated mucin-like protein 1 homolog (310 aa).

Positions 1–20 are cleaved as a signal peptide; it reads MVYKTLFALCILTAGWRVQS. Residues 21-258 lie on the Extracellular side of the membrane; the sequence is LPTSAPLSVS…EVEHALSSGS (238 aa). A compositionally biased stretch (polar residues) spans 40–74; sequence TIWTSSPQNTDADTASPSNGTHNNSVLPVTASAPT. A disordered region spans residues 40-224; sequence TIWTSSPQNT…VPQEKTPPTT (185 aa). Asn-58, Asn-62, and Asn-80 each carry an N-linked (GlcNAc...) asparagine glycan. The span at 92–103 shows a compositional bias: polar residues; the sequence is SPGSNWEGTNTD. Residues 150–209 show a composition bias toward low complexity; it reads SPQAPASSPSSLSTSPPEVFSVSVTTNHSSTVTSTQPTGAPTAPESPTEESSSDHTPTSH. An N-linked (GlcNAc...) asparagine glycan is attached at Asn-176. A helical membrane pass occupies residues 259–279; it reads IAAITVTVIAVVLLVFGVAAY. The Cytoplasmic segment spans residues 280–310; it reads LKIRHSSYGRLLDDHDYGSWGNYNNPLYDDS. At Ser-298 the chain carries Phosphoserine.

It belongs to the PARM family. Highly N-glycosylated and O-glycosylated.

Its subcellular location is the cell membrane. The protein resides in the golgi apparatus membrane. It localises to the endosome membrane. In terms of biological role, may regulate TLP1 expression and telomerase activity, thus enabling certain prostatic cells to resist apoptosis. This is Prostate androgen-regulated mucin-like protein 1 homolog (PARM1) from Pongo abelii (Sumatran orangutan).